The following is a 309-amino-acid chain: Phytoene synthase (309 aa).

It belongs to the phytoene/squalene synthase family.

It catalyses the reaction 2 (2E,6E,10E)-geranylgeranyl diphosphate = 15-cis-phytoene + 2 diphosphate. The protein operates within carotenoid biosynthesis; phytoene biosynthesis; all-trans-phytoene from geranylgeranyl diphosphate: step 1/1. Catalyzes the reaction from prephytoene diphosphate to phytoene. The protein is Phytoene synthase (crtB) of Arthrospira platensis (Spirulina platensis).